Reading from the N-terminus, the 521-residue chain is Zinc finger protein GLIS2 (521 aa).

The interval 35–174 (ALHRELGLVD…AKQLVCRWAK (140 aa)) is interaction with CTNND1. Disordered stretches follow at residues 41 to 63 (GLVD…LLNP) and 84 to 110 (SPPS…DLPP). Residues 49–58 (PGSPGSPPPG) are compositionally biased toward pro residues. The segment at 71-137 (GRFSAAPLVD…SSFQFFLPLG (67 aa)) is transcription activation. Residues 84–100 (SPPSGLDSPNGSSSLSP) show a composition bias toward low complexity. A transcription repression region spans residues 148–171 (SFLPPPKDKCLSPELPLAKQLVCR). The C2H2-type 1 zinc finger occupies 168-193 (LVCRWAKCNQLFELLQDLVDHVNDHH). The C2H2-type 2; atypical zinc finger occupies 202–229 (YCCHWEGCARHGRGFNARYKMLIHIRTH). 3 consecutive C2H2-type zinc fingers follow at residues 235–257 (HRCP…NRSH), 263–287 (YVCP…TRTH), and 293–317 (YYCK…IKAH). The tract at residues 436 to 501 (AGSKAEGEKG…NSAASSPEVL (66 aa)) is disordered. The segment covering 455–470 (GLEDHKTPLERTERSR) has biased composition (basic and acidic residues). Polar residues predominate over residues 487-496 (DLSTGNSAAS).

The protein belongs to the GLI C2H2-type zinc-finger protein family. Interacts with CTBP1 and HDAC3. Interacts with CTNNB1 and CTNND1. Interacts with SUFU. In terms of processing, C-terminus cleavage is induced by interaction with CTNND1 and enhances by Src tyrosine kinase. As to expression, expressed at high levels in kidney, and at lower levels in heart and lung.

Its subcellular location is the nucleus speckle. The protein localises to the cytoplasm. Can act either as a transcriptional repressor or as a transcriptional activator, depending on the cell context. Acts as a repressor of the Hedgehog signaling pathway. Represses the Hedgehog-dependent expression of Wnt4. Necessary to maintain the differentiated epithelial phenotype in renal cells through the inhibition of SNAI1, which itself induces the epithelial-to-mesenchymal transition. Represses transcriptional activation by CTNNB1 in the Wnt signaling pathway. May act by recruiting the corepressors CTBP1 and HDAC3. May be involved in neuron differentiation. This Mus musculus (Mouse) protein is Zinc finger protein GLIS2 (Glis2).